Reading from the N-terminus, the 168-residue chain is Ribosome maturation factor RimM (168 aa).

Residues 95–166 (EHEFYYSDII…RIQITPMEGL (72 aa)) enclose the PRC barrel domain.

It belongs to the RimM family. In terms of assembly, binds ribosomal protein uS19.

It localises to the cytoplasm. Functionally, an accessory protein needed during the final step in the assembly of 30S ribosomal subunit, possibly for assembly of the head region. Essential for efficient processing of 16S rRNA. May be needed both before and after RbfA during the maturation of 16S rRNA. It has affinity for free ribosomal 30S subunits but not for 70S ribosomes. The polypeptide is Ribosome maturation factor RimM (Staphylococcus saprophyticus subsp. saprophyticus (strain ATCC 15305 / DSM 20229 / NCIMB 8711 / NCTC 7292 / S-41)).